The primary structure comprises 742 residues: F-box only protein 30 (742 aa).

The segment at 49 to 108 (EHRLLCPFERVPCLNSNFGCPFTLARNKVAEHLEMCPASVVCCTMEWNRWPVSYSDRKSY) adopts a TRAF-type zinc-finger fold. The tract at residues 214 to 242 (SLQGTTNEMDEESNRESSQDRNAKDQDHL) is disordered. A compositionally biased stretch (basic and acidic residues) spans 225–242 (ESNRESSQDRNAKDQDHL). Position 379 is a phosphoserine (Ser379). Positions 607–653 (SDHLSSLPFEVLQHIAGFLDGFSLCQLACVSRLMRDICGSLLQSRGM) constitute an F-box domain.

Part of a SCF (SKP1-cullin-F-box) protein ligase complex. Interacts with SKP1, CUL1 and RBX1/ROC1. In terms of processing, auto-ubiquitinated. Post-translationally, may be neddylated. Neddylation may be required for E3 ligase activity.

It participates in protein modification; protein ubiquitination. In terms of biological role, substrate-recognition component of the SCF (SKP1-CUL1-F-box protein)-type E3 ubiquitin ligase complex. Required for muscle atrophy following denervation. This Rattus norvegicus (Rat) protein is F-box only protein 30 (Fbxo30).